The primary structure comprises 279 residues: 4-deoxy-L-threo-5-hexosulose-uronate ketol-isomerase (279 aa).

Positions 197, 199, 204, and 246 each coordinate Zn(2+).

It belongs to the KduI family. It depends on Zn(2+) as a cofactor.

The enzyme catalyses 5-dehydro-4-deoxy-D-glucuronate = 3-deoxy-D-glycero-2,5-hexodiulosonate. Its pathway is glycan metabolism; pectin degradation; 2-dehydro-3-deoxy-D-gluconate from pectin: step 4/5. In terms of biological role, catalyzes the isomerization of 5-dehydro-4-deoxy-D-glucuronate to 3-deoxy-D-glycero-2,5-hexodiulosonate. The protein is 4-deoxy-L-threo-5-hexosulose-uronate ketol-isomerase of Kineococcus radiotolerans (strain ATCC BAA-149 / DSM 14245 / SRS30216).